The chain runs to 308 residues: HPr kinase/phosphorylase (308 aa).

Residues His138 and Lys159 contribute to the active site. ATP is bound at residue 153-160; that stretch reads GESGLGKS. Residue Ser160 participates in Mg(2+) binding. The active-site Proton acceptor; for phosphorylation activity. Proton donor; for dephosphorylation activity is the Asp177. The segment at 201-210 is important for the catalytic mechanism of both phosphorylation and dephosphorylation; the sequence is LEVRGLGLLD. Glu202 is a Mg(2+) binding site. Arg243 is a catalytic residue. An important for the catalytic mechanism of dephosphorylation region spans residues 264-269; it reads QVAAGR.

The protein belongs to the HPrK/P family. Homohexamer. Mg(2+) serves as cofactor.

It catalyses the reaction [HPr protein]-L-serine + ATP = [HPr protein]-O-phospho-L-serine + ADP + H(+). The enzyme catalyses [HPr protein]-O-phospho-L-serine + phosphate + H(+) = [HPr protein]-L-serine + diphosphate. In terms of biological role, catalyzes the ATP- as well as the pyrophosphate-dependent phosphorylation of a specific serine residue in HPr, a phosphocarrier protein of the phosphoenolpyruvate-dependent sugar phosphotransferase system (PTS). HprK/P also catalyzes the pyrophosphate-producing, inorganic phosphate-dependent dephosphorylation (phosphorolysis) of seryl-phosphorylated HPr (P-Ser-HPr). This is HPr kinase/phosphorylase from Bordetella avium (strain 197N).